The following is a 679-amino-acid chain: Glycine--tRNA ligase beta subunit (679 aa).

This sequence belongs to the class-II aminoacyl-tRNA synthetase family. In terms of assembly, tetramer of two alpha and two beta subunits.

The protein resides in the cytoplasm. It carries out the reaction tRNA(Gly) + glycine + ATP = glycyl-tRNA(Gly) + AMP + diphosphate. The protein is Glycine--tRNA ligase beta subunit of Streptococcus agalactiae serotype V (strain ATCC BAA-611 / 2603 V/R).